Here is a 320-residue protein sequence, read N- to C-terminus: mRNA decay activator protein ZFP36 (320 aa).

A necessary for nuclear export region spans residues 1 to 15 (MDLSAIYESLMSMSH). Residues 1-93 (MDLSAIYESL…PTSPTATPTT (93 aa)) form a necessary and sufficient for the association with mRNA decay enzymes and mRNA decay activation region. Necessary for localization of ARE-containing mRNAs to processing bodies (PBs) stretches follow at residues 1–167 (MDLS…DLAL) and 93–320 (TSSR…SVSE). The disordered stretch occupies residues 17-50 (LSPDHGGTESSGGLWNINSSDSIPSGVTSRLTGR). Polar residues predominate over residues 27 to 50 (SGGLWNINSSDSIPSGVTSRLTGR). S53 is subject to Phosphoserine; by MAPKAPK2. At S59 the chain carries Phosphoserine. The stretch at 64-68 (PPPPG) is one P-P-P-P-G repeat. Positions 66–85 (PPGFAPLAPRPGPELSPSPT) are enriched in pro residues. The interval 66 to 95 (PPGFAPLAPRPGPELSPSPTSPTATPTTSS) is disordered. Phosphoserine is present on residues S81 and S83. T85 bears the Phosphothreonine mark. S86 bears the Phosphoserine mark. The span at 86 to 95 (SPTATPTTSS) shows a compositional bias: low complexity. Residues 88–161 (TATPTTSSRY…GSRCHFIHNP (74 aa)) are necessary for nuclear localization. The segment at 90 to 166 (TPTTSSRYKT…FIHNPTEDLA (77 aa)) is necessary for RNA-binding. 2 consecutive C3H1-type zinc fingers follow at residues 96–124 (RYKTELCRTYSESGRCRYGAKCQFAHGPG) and 134–162 (KYKTELCHKFYLQGRCPYGSRCHFIHNPT). The necessary for interaction with PABPN1 stretch occupies residues 96-187 (RYKTELCRTY…ISFSGLPSGR (92 aa)). Residues 167 to 320 (LPGQPHVLRQ…PIFNRISVSE (154 aa)) form a necessary for mRNA decay activation region. S179 carries the phosphoserine; by MAPKAPK2 modification. Residues 180-310 (FSGLPSGRRT…PQPPAPPRRL (131 aa)) are disordered. S190 bears the Phosphoserine mark. The stretch at 191–195 (PPPPG) is one P-P-P-P-G repeat. Over residues 197–209 (SGPSLSSCSFSPS) the composition is skewed to low complexity. Phosphoserine is present on S211. Residues 212–216 (PPPPG) form a P-P-P-P-G repeat. The residue at position 221 (S221) is a Phosphoserine; by MAPK1; in vitro. At T251 the chain carries Phosphothreonine. S270 and S290 each carry phosphoserine. The span at 280–290 (SSGSSLGGSDS) shows a compositional bias: low complexity. Residues 300 to 309 (PPQPPAPPRR) are compositionally biased toward pro residues. Positions 306–320 (PPRRLPIFNRISVSE) are interaction with CNOT1. Residue S317 is modified to Phosphoserine.

In terms of assembly, associates with cytoplasmic CCR4-NOT and PAN2-PAN3 deadenylase complexes to trigger ARE-containing mRNA deadenylation and decay processes. Part of a mRNA decay activation complex at least composed of poly(A)-specific exoribonucleases CNOT6, EXOSC2 and XRN1 and mRNA-decapping enzymes DCP1A and DCP2. Associates with the RNA exosome complex. Interacts (via phosphorylated form) with 14-3-3 proteins; these interactions promote exclusion of ZFP36 from cytoplasmic stress granules in response to arsenite treatment in a MAPKAPK2-dependent manner and does not prevent CCR4-NOT deadenylase complex recruitment or ZFP36-induced ARE-containing mRNA deadenylation and decay processes. Interacts with 14-3-3 proteins; these interactions occur in response to rapamycin in an Akt-dependent manner. Interacts with AGO2 and AGO4. Interacts (via C-terminus) with CNOT1; this interaction occurs in a RNA-independent manner and induces mRNA deadenylation. Interacts (via N-terminus) with CNOT6. Interacts with CNOT6L. Interacts (via C-terminus) with CNOT7; this interaction occurs in a RNA-independent manner, induces mRNA deadenylation and is inhibited in a phosphorylation MAPKAPK2-dependent manner. Interacts (via unphosphorylated form) with CNOT8; this interaction occurs in a RNA-independent manner and is inhibited in a phosphorylation MAPKAPK2-dependent manner. Interacts with DCP1A. Interacts (via N-terminus) with DCP2. Interacts with EDC3. Interacts (via N-terminus) with EXOSC2. Interacts with heat shock 70 kDa proteins. Interacts with KHSRP; this interaction increases upon cytokine-induced treatment. Interacts with MAP3K4; this interaction enhances the association with SH3KBP1/CIN85. Interacts with MAPKAPK2; this interaction occurs upon skeletal muscle satellite cell activation. Interacts with NCL. Interacts with NUP214; this interaction increases upon lipopolysaccharide (LPS) stimulation. Interacts with PABPC1; this interaction occurs in a RNA-dependent manner. Interacts (via hypophosphorylated form) with PABPN1 (via RRM domain and C-terminal arginine-rich region); this interaction occurs in the nucleus in a RNA-independent manner, decreases in presence of single-stranded poly(A) RNA-oligomer and in a p38 MAPK-dependent-manner and inhibits nuclear poly(A) tail synthesis. Interacts with PAN2. Interacts (via C3H1-type zinc finger domains) with PKM. Interacts (via C3H1-type zinc finger domains) with nuclear RNA poly(A) polymerase. Interacts with PPP2CA; this interaction occurs in LPS-stimulated cells and induces ZFP36 dephosphorylation, and hence may promote ARE-containing mRNAs decay. Interacts (via C-terminus) with PRR5L (via C-terminus); this interaction may accelerate ZFP36-mediated mRNA decay during stress. Interacts (via C-terminus) with SFN; this interaction occurs in a phosphorylation-dependent manner. Interacts (via extreme C-terminal region) with SH3KBP1/CIN85 (via SH3 domains); this interaction enhances MAP3K4-induced phosphorylation of ZFP36 at Ser-59 and Ser-86 and does not alter neither ZFP36 binding to ARE-containing transcripts nor TNF-alpha mRNA decay. Interacts with XRN1. Interacts (via C-terminus and Ser-179 phosphorylated form) with YWHAB; this interaction occurs in a p38/MAPKAPK2-dependent manner, increases cytoplasmic localization of ZFP36 and protects ZFP36 from Ser-179 dephosphorylation by serine/threonine phosphatase 2A, and hence may be crucial for stabilizing ARE-containing mRNAs. Interacts (via phosphorylated form) with YWHAE. Interacts (via C-terminus) with YWHAG; this interaction occurs in a phosphorylation-dependent manner. Interacts with YWHAH; this interaction occurs in a phosphorylation-dependent manner. Interacts with YWHAQ; this interaction occurs in a phosphorylation-dependent manner. Interacts with (via C-terminus) YWHAZ; this interaction occurs in a phosphorylation-dependent manner. Does not interact with SH3KBP1. Interacts (via P-P-P-P-G repeats) with GIGYF2; the interaction is direct. Phosphorylated. Phosphorylation at serine and/or threonine residues occurs in a p38 MAPK- and MAPKAPK2-dependent manner. Phosphorylated by MAPKAPK2 at Ser-53 and Ser-179; phosphorylation increases its stability and cytoplasmic localization, promotes binding to 14-3-3 adapter proteins and inhibits the recruitment of cytoplasmic CCR4-NOT and PAN2-PAN3 deadenylase complexes to the mRNA decay machinery, thereby inhibiting ZFP36-induced ARE-containing mRNA deadenylation and decay processes. Phosphorylation by MAPKAPK2 does not impair ARE-containing RNA-binding. Phosphorylated in a MAPKAPK2- and p38 MAPK-dependent manner upon skeletal muscle satellite cell activation; this phosphorylation inhibits ZFP36-mediated mRNA decay activity, and hence stabilizes MYOD1 mRNA. Phosphorylated by MAPK1 upon mitogen stimulation. Phosphorylated at Ser-59 and Ser-86; these phosphorylations increase in a SH3KBP1-dependent manner. Phosphorylated at serine and threonine residues in a pyruvate kinase PKM- and p38 MAPK-dependent manner. Phosphorylation at Ser-53 may participate in the PKM-mediated degradation of ZFP36 in a p38 MAPK-dependent manner. Dephosphorylated by serine/threonine phosphatase 2A at Ser-179. Post-translationally, ubiquitinated; pyruvate kinase (PKM)-dependent ubiquitination leads to proteasomal degradation through a p38 MAPK signaling pathway.

Its subcellular location is the nucleus. The protein localises to the cytoplasm. It localises to the cytoplasmic granule. The protein resides in the P-body. In terms of biological role, zinc-finger RNA-binding protein that destabilizes numerous cytoplasmic AU-rich element (ARE)-containing mRNA transcripts by promoting their poly(A) tail removal or deadenylation, and hence provide a mechanism for attenuating protein synthesis. Acts as an 3'-untranslated region (UTR) ARE mRNA-binding adapter protein to communicate signaling events to the mRNA decay machinery. Recruits deadenylase CNOT7 (and probably the CCR4-NOT complex) via association with CNOT1, and hence promotes ARE-mediated mRNA deadenylation. Also functions by recruiting components of the cytoplasmic RNA decay machinery to the bound ARE-containing mRNAs. Self regulates by destabilizing its own mRNA. Binds to 3'-UTR ARE of numerous mRNAs. Also binds to ARE of its own mRNA. Plays a role in anti-inflammatory responses; suppresses tumor necrosis factor (TNF)-alpha production by stimulating ARE-mediated TNF-alpha mRNA decay and several other inflammatory ARE-containing mRNAs in interferon (IFN)- and/or lipopolysaccharide (LPS)-induced macrophages. Also plays a role in the regulation of dendritic cell maturation at the post-transcriptional level, and hence operates as part of a negative feedback loop to limit the inflammatory response. Promotes ARE-mediated mRNA decay of hypoxia-inducible factor HIF1A mRNA during the response of endothelial cells to hypoxia. Positively regulates early adipogenesis of preadipocytes by promoting ARE-mediated mRNA decay of immediate early genes (IEGs). Negatively regulates hematopoietic/erythroid cell differentiation by promoting ARE-mediated mRNA decay of the transcription factor STAT5B mRNA. Plays a role in maintaining skeletal muscle satellite cell quiescence by promoting ARE-mediated mRNA decay of the myogenic determination factor MYOD1 mRNA. Also associates with and regulates the expression of non-ARE-containing target mRNAs at the post-transcriptional level, such as MHC class I mRNAs. Participates in association with argonaute RISC catalytic components in the ARE-mediated mRNA decay mechanism; assists microRNA (miRNA) targeting ARE-containing mRNAs. May also play a role in the regulation of cytoplasmic mRNA decapping; enhances decapping of ARE-containing RNAs, in vitro. Involved in the delivery of target ARE-mRNAs to processing bodies (PBs). In addition to its cytosolic mRNA-decay function, affects nuclear pre-mRNA processing. Negatively regulates nuclear poly(A)-binding protein PABPN1-stimulated polyadenylation activity on ARE-containing pre-mRNA during LPS-stimulated macrophages. Also involved in the regulation of stress granule (SG) and P-body (PB) formation and fusion. Plays a role in the regulation of keratinocyte proliferation, differentiation and apoptosis. Plays a role as a tumor suppressor by inhibiting cell proliferation in breast cancer cells. The polypeptide is mRNA decay activator protein ZFP36 (Rattus norvegicus (Rat)).